We begin with the raw amino-acid sequence, 456 residues long: N(6)-adenosine-methyltransferase non-catalytic subunit METTL14 (456 aa).

The tract at residues 45 to 76 (AETRETCRASYDTSAPNAKRKYQDEGETDEDK) is disordered. Interaction with METTL3 stretches follow at residues 135 to 136 (RD) and 237 to 238 (SG). A positively charged region required for RNA-binding region spans residues 245–254 (RVCLRKWGYR). Interaction with METTL3 stretches follow at residues 255–258 (RCED) and 278–287 (KAVFQRTKEH). Residues 297–298 (KR) are positively charged region required for RNA-binding. The interval 308-312 (NVDID) is interaction with METTL3. The segment at 393 to 456 (ERLRPKSPPP…GAHRGGFPPR (64 aa)) is disordered. Ser-399 carries the post-translational modification Phosphoserine. Residues 409–423 (GGGAPRGGGRGGTSA) show a composition bias toward gly residues. Over residues 425-440 (RGRERNRSNFRGERGG) the composition is skewed to basic and acidic residues. A compositionally biased stretch (gly residues) spans 441–450 (FRGGRGGAHR).

Belongs to the MT-A70-like family. In terms of assembly, heterodimer; heterodimerizes with METTL3 to form an antiparallel heterodimer that constitutes an active methyltransferase. Component of the WMM complex, a N6-methyltransferase complex composed of a catalytic subcomplex, named MAC, and of an associated subcomplex, named MACOM. The MAC subcomplex is composed of METTL3 and METTL14. The MACOM subcomplex is composed of WTAP, ZC3H13, CBLL1/HAKAI, VIRMA, and, in some cases of RBM15 (RBM15 or RBM15B).

It is found in the nucleus. Functionally, the METTL3-METTL14 heterodimer forms a N6-methyltransferase complex that methylates adenosine residues at the N(6) position of some mRNAs and regulates the circadian clock, differentiation of embryonic stem cells and cortical neurogenesis. In the heterodimer formed with METTL3, METTL14 constitutes the RNA-binding scaffold that recognizes the substrate rather than the catalytic core. N6-methyladenosine (m6A), which takes place at the 5'-[AG]GAC-3' consensus sites of some mRNAs, plays a role in mRNA stability and processing. M6A acts as a key regulator of mRNA stability by promoting mRNA destabilization and degradation. In embryonic stem cells (ESCs), m6A methylation of mRNAs encoding key naive pluripotency-promoting transcripts results in transcript destabilization. M6A regulates spermatogonial differentiation and meiosis and is essential for male fertility and spermatogenesis. M6A also regulates cortical neurogenesis: m6A methylation of transcripts related to transcription factors, neural stem cells, the cell cycle and neuronal differentiation during brain development promotes their destabilization and decay, promoting differentiation of radial glial cells. This chain is N(6)-adenosine-methyltransferase non-catalytic subunit METTL14 (METTL14), found in Bos taurus (Bovine).